Reading from the N-terminus, the 380-residue chain is 3-dehydroquinate synthase (380 aa).

Residues 100–104 (GAASD), 124–125 (TT), K137, and K146 each bind NAD(+). E179, H251, and H267 together coordinate Zn(2+). A disordered region spans residues 320-343 (YMQRDKKNMQSNDTDSDKDSREMP).

The protein belongs to the sugar phosphate cyclases superfamily. Dehydroquinate synthase family. Requires NAD(+) as cofactor. The cofactor is Co(2+). Zn(2+) serves as cofactor.

The protein localises to the cytoplasm. It carries out the reaction 7-phospho-2-dehydro-3-deoxy-D-arabino-heptonate = 3-dehydroquinate + phosphate. The protein operates within metabolic intermediate biosynthesis; chorismate biosynthesis; chorismate from D-erythrose 4-phosphate and phosphoenolpyruvate: step 2/7. Catalyzes the conversion of 3-deoxy-D-arabino-heptulosonate 7-phosphate (DAHP) to dehydroquinate (DHQ). This chain is 3-dehydroquinate synthase, found in Tropheryma whipplei (strain Twist) (Whipple's bacillus).